Here is a 254-residue protein sequence, read N- to C-terminus: Isoprenyl transferase (254 aa).

D24 is a catalytic residue. Mg(2+) is bound at residue D24. Residues 25 to 28 (GNGR), W29, R37, H41, and 69 to 71 (SSE) each bind substrate. N72 acts as the Proton acceptor in catalysis. Substrate is bound by residues W73, R75, R192, and 198–200 (RIS). E211 contacts Mg(2+).

Belongs to the UPP synthase family. As to quaternary structure, homodimer. Mg(2+) serves as cofactor.

Catalyzes the condensation of isopentenyl diphosphate (IPP) with allylic pyrophosphates generating different type of terpenoids. This chain is Isoprenyl transferase, found in Bordetella parapertussis (strain 12822 / ATCC BAA-587 / NCTC 13253).